Reading from the N-terminus, the 816-residue chain is Coiled-coil and C2 domain-containing protein 1-like (816 aa).

The span at 1 to 11 shows a compositional bias: basic and acidic residues; that stretch reads MFSRKKPEPAK. Disordered regions lie at residues 1–135, 157–176, and 186–269; these read MFSR…TFLP, ANAKTAGDSGKARRFGRGLK, and AAGK…RQTD. Over residues 25–47 the composition is skewed to acidic residues; that stretch reads IPDDFDPSAGYGEDDGGDSDLEA. A compositionally biased stretch (basic and acidic residues) spans 73 to 85; the sequence is DLDKMIADSLRDV. Over residues 86-100 the composition is skewed to acidic residues; it reads SDDDDDDNLESDPDL. Residues 122–131 show a composition bias toward low complexity; that stretch reads PPAASEEPVQ. A DM14 1 region spans residues 145 to 200; that stretch reads IKQRLEMYKQAEANAKTAGDSGKARRFGRGLKTLKDLHRQAAAGKSINVDDIPPEV. Residues 220-243 show a composition bias toward pro residues; that stretch reads PSTPASPPPVPSRAAPDPPTPGTP. 2 DM14 regions span residues 265–317 and 365–419; these read SRQT…MPPP and LQQR…LPVP. Residues 355-382 adopt a coiled-coil conformation; it reads LAAATNMLEALQQRLEKYQSVEAAAKAE. Positions 418 to 492 are disordered; sequence VPPGFGPLPT…TRTSGNQQKN (75 aa). Over residues 424-433 the composition is skewed to low complexity; sequence PLPTADAAPV. The span at 434–449 shows a compositional bias: pro residues; that stretch reads APTPSLPTSPTSPPPT. Low complexity predominate over residues 450-471; sequence ASTSAGGTPSSSSATTPTAPRK. Residues 483–492 are compositionally biased toward polar residues; that stretch reads TRTSGNQQKN. The DM14 4 stretch occupies residues 502–556; that stretch reads LLERQKEFKLAAIEAKKAGEIDQAKEYLKIFKGFDSLLNAASSGLPVDLSTLPVP. A C2 domain is found at 637–776; sequence RKNEPLPKFH…ETKCEIHDTY (140 aa).

It belongs to the CC2D1 family. In terms of assembly, interacts (via DM14 domains 1 and 3) with shrb; the interaction is direct and blocks access to the surface involved in shrb polymerization. This interaction may be required for the ESCRT-III complex role in multivesicular body formation.

Its subcellular location is the cytoplasm. The protein localises to the cytosol. It is found in the apicolateral cell membrane. It localises to the cell cortex. The protein resides in the endosome. Functionally, phosphatidyl inositol monophosphate binding protein involved in endosomal protein sorting through regulation of the endosomal sorting required for transport (ESCRT) pathway. Required for full activity of the ESCRT-III complex core component shrb/shrub, probably by preventing its inappropriate polymerisation. Required, but not essential, for the efficient generation of intraluminal vesicles (ILVs) in multivesicular bodies (MVBs). Involved in a late stage of the endosomal pathway targeting transmembrane proteins of the plasma membrane for lysosomal degradation. Plays a critical role in regulation of multiple signal transduction pathways, including the Notch and BMP/decapentaplegic (dpp) signaling pathways, through targeting of membrane bound receptors to multivesicular bodies, isolating them from the cytoplasm and targeting them for lysosomal degradation. Involved in targeting N/Notch for endosomal degradation, negatively regulating the Notch signaling pathway. Regulates Notch signaling in imaginal disk cells and follicle cells during oogenesis and multiple developmental processes, including development of wings, veins, legs, eyes and bristles. Restricts the activity of Notch to the dorsoventral (D/V) boundary of the wing imaginal disk. In external sensory organ development regulates Notch signaling during asymmetric cell division and differentiation of sensory organ precursor cells. May be involved in regulation of apoptosis and cell growth independent of Notch signaling. Involved in targeting tkv for endosomal degradation, negatively regulating the BMP/decapentaplegic (dpp) signaling pathway. Regulates the BMP/dpp signaling pathway in follicle cells during oogenesis, but not in imaginal disk cells during wing development. May be involved in differentiation or morphogenesis of peripodial epithelial cells in the developing imaginal disk. Involved in abscission of germline cells during oogenesis. In Drosophila melanogaster (Fruit fly), this protein is Coiled-coil and C2 domain-containing protein 1-like.